Reading from the N-terminus, the 319-residue chain is D-alanine--D-alanine ligase (319 aa).

An ATP-grasp domain is found at 120 to 315 (KRVLAQAGVP…YPELLRRLVE (196 aa)). ATP is bound at residue 147–198 (DPPFFVKPANTGSSVGISRVERFQDLEAALALAFRYDEKAVVEKALSPVREL). Mg(2+) contacts are provided by Asp-270, Glu-282, and Asn-284.

Belongs to the D-alanine--D-alanine ligase family. It depends on Mg(2+) as a cofactor. Requires Mn(2+) as cofactor.

Its subcellular location is the cytoplasm. The catalysed reaction is 2 D-alanine + ATP = D-alanyl-D-alanine + ADP + phosphate + H(+). It participates in cell wall biogenesis; peptidoglycan biosynthesis. Functionally, cell wall formation. The sequence is that of D-alanine--D-alanine ligase from Thermus thermophilus (strain ATCC BAA-163 / DSM 7039 / HB27).